The following is a 464-amino-acid chain: Kynureninase 2 (464 aa).

Pyridoxal 5'-phosphate contacts are provided by residues leucine 135, threonine 136, 163-166 (FPSD), aspartate 248, histidine 251, and tyrosine 273. The residue at position 274 (lysine 274) is an N6-(pyridoxal phosphate)lysine. Tryptophan 313 and asparagine 341 together coordinate pyridoxal 5'-phosphate.

This sequence belongs to the kynureninase family. Homodimer. It depends on pyridoxal 5'-phosphate as a cofactor.

The protein resides in the cytoplasm. It catalyses the reaction L-kynurenine + H2O = anthranilate + L-alanine + H(+). It carries out the reaction 3-hydroxy-L-kynurenine + H2O = 3-hydroxyanthranilate + L-alanine + H(+). The protein operates within amino-acid degradation; L-kynurenine degradation; L-alanine and anthranilate from L-kynurenine: step 1/1. It participates in cofactor biosynthesis; NAD(+) biosynthesis; quinolinate from L-kynurenine: step 2/3. Catalyzes the cleavage of L-kynurenine (L-Kyn) and L-3-hydroxykynurenine (L-3OHKyn) into anthranilic acid (AA) and 3-hydroxyanthranilic acid (3-OHAA), respectively. The polypeptide is Kynureninase 2 (bna5-2) (Aspergillus fumigatus (strain CBS 144.89 / FGSC A1163 / CEA10) (Neosartorya fumigata)).